The following is a 103-amino-acid chain: Large ribosomal subunit protein bL21 (103 aa).

It belongs to the bacterial ribosomal protein bL21 family. In terms of assembly, part of the 50S ribosomal subunit. Contacts protein L20.

In terms of biological role, this protein binds to 23S rRNA in the presence of protein L20. The protein is Large ribosomal subunit protein bL21 of Pseudomonas syringae pv. syringae (strain B728a).